The chain runs to 501 residues: MVAALSSLAAALGAGLHPKTLLLGAVAFLFFAYFLKTRRPKNYPPGPWRLPFLGNLFTLDMEKSHLQLQQFVKKYGNLFCLDLAGKSIVIVTGLPLIKEVLVHMDQNFINRPVPPIRERSFKKNGLIMSSGQLWKEQRRFALMTLRNFGLGKKSLEERIQEEARHLTEAMEKEGGQPFDAHFKINNAVSNIICSITFGERFEYHDGQFQELLKLFDEVMYLEASMLCQLYNIFPWIMKFLPGAHQTLFSNWKKLELFVSRMLENHKKDWNPAETRDFIDAYLKEMSKYPGSATSSFNEENLICSTLDLFLAGTETTSDMRWGLLFMALYPEIQEKVHAEIDSVIGQWQQPSMASRESLPYTNAVIHEVQRMGNILPLNVPREVTVDTTLAGYHLPKGTVVLTNLTALHKDPEEWATPDTFNPEHFLENGQFKKKEAFIPFSIGKRACLGEQLAKSELFIFFTSLMQKFTFKPPSDEKLTLNFRMGITLSPVKHRICAIPRA.

C447 contacts heme.

The protein belongs to the cytochrome P450 family. Requires heme as cofactor. Small intestine.

Its subcellular location is the endoplasmic reticulum membrane. The protein localises to the microsome membrane. It carries out the reaction an organic molecule + reduced [NADPH--hemoprotein reductase] + O2 = an alcohol + oxidized [NADPH--hemoprotein reductase] + H2O + H(+). Functionally, catalyzes the N-demethylation of benzphetamine to formaldehyde. This is Cytochrome P450 2J1 (CYP2J1) from Oryctolagus cuniculus (Rabbit).